The chain runs to 362 residues: Serine/threonine-protein kinase SBK2 (362 aa).

Positions 1 to 11 (MPGKQSEDRPM) are enriched in basic and acidic residues. The interval 1–20 (MPGKQSEDRPMEVAAVEDGG) is disordered. Residues 62–330 (YEEVRPLGQG…IKSYLGQPWK (269 aa)) enclose the Protein kinase domain. ATP contacts are provided by residues 68–76 (LGQGRFGRV) and K91. The active-site Proton acceptor is D183. A disordered region spans residues 317–362 (PVSSIKSYLGQPWKQREEGAEELTKELREDGSRGGQEAAKGEQPAC). The segment covering 330–348 (KQREEGAEELTKELREDGS) has biased composition (basic and acidic residues).

It belongs to the protein kinase superfamily. Ser/Thr protein kinase family. STKL subfamily.

The catalysed reaction is L-seryl-[protein] + ATP = O-phospho-L-seryl-[protein] + ADP + H(+). The enzyme catalyses L-threonyl-[protein] + ATP = O-phospho-L-threonyl-[protein] + ADP + H(+). The protein is Serine/threonine-protein kinase SBK2 (Sbk2) of Rattus norvegicus (Rat).